Here is a 241-residue protein sequence, read N- to C-terminus: 6-phosphogluconolactonase (241 aa).

This sequence belongs to the glucosamine/galactosamine-6-phosphate isomerase family. 6-phosphogluconolactonase subfamily.

The enzyme catalyses 6-phospho-D-glucono-1,5-lactone + H2O = 6-phospho-D-gluconate + H(+). Its pathway is carbohydrate degradation; pentose phosphate pathway; D-ribulose 5-phosphate from D-glucose 6-phosphate (oxidative stage): step 2/3. In terms of biological role, hydrolysis of 6-phosphogluconolactone to 6-phosphogluconate. In Treponema pallidum (strain Nichols), this protein is 6-phosphogluconolactonase (pgl).